The primary structure comprises 676 residues: UvrABC system protein C (676 aa).

A GIY-YIG domain is found at 16-95 (VEPGVYRFRD…IKEFDPRFNI (80 aa)). Positions 208–243 (DRLVRDLERKMTAAAEDLDFERAARLRDDIGALRRA) constitute a UVR domain.

Belongs to the UvrC family. Interacts with UvrB in an incision complex.

The protein resides in the cytoplasm. The UvrABC repair system catalyzes the recognition and processing of DNA lesions. UvrC both incises the 5' and 3' sides of the lesion. The N-terminal half is responsible for the 3' incision and the C-terminal half is responsible for the 5' incision. The sequence is that of UvrABC system protein C from Mycobacterium sp. (strain KMS).